A 261-amino-acid polypeptide reads, in one-letter code: Cytochrome c oxidase subunit 3 (261 aa).

The Mitochondrial matrix portion of the chain corresponds to 1–15 (MTHQTHAYHMVNPSP). Residues 16–34 (WPLTGALSALLMTSGLIMW) traverse the membrane as a helical segment. Residues 35–40 (FHYNSM) are Mitochondrial intermembrane-facing. Residues 41–66 (SLLTLGFTTNLLTMYQWWRDVIREGT) traverse the membrane as a helical segment. At 67-72 (FQGHHT) the chain is on the mitochondrial matrix side. A helical transmembrane segment spans residues 73-105 (PIVQKGLRYGMVLFIVSEVFFFAGFFWAFYHSS). The Mitochondrial intermembrane segment spans residues 106–128 (LAPTPELGGCWPPTGIIPLNPLE). The helical transmembrane segment at 129–152 (VPLLNTSVLLASGVSITWAHHSLM) threads the bilayer. The Mitochondrial matrix segment spans residues 153 to 155 (EGN). The helical transmembrane segment at 156–183 (RKHMLQALFITISLGVYFTLLQASEYYE) threads the bilayer. Residues 184–190 (TSFTISD) lie on the Mitochondrial intermembrane side of the membrane. A helical membrane pass occupies residues 191-223 (GVYGSTFFMATGFHGLHVIIGSTFLIVCFLRQL). Residues 224-232 (YYHFTSNHH) are Mitochondrial matrix-facing. The helical transmembrane segment at 233–256 (FGFEAAAWYWHFVDVVWLFLYVSI) threads the bilayer. The Mitochondrial intermembrane segment spans residues 257 to 261 (YWWGS).

It belongs to the cytochrome c oxidase subunit 3 family. In terms of assembly, component of the cytochrome c oxidase (complex IV, CIV), a multisubunit enzyme composed of 14 subunits. The complex is composed of a catalytic core of 3 subunits MT-CO1, MT-CO2 and MT-CO3, encoded in the mitochondrial DNA, and 11 supernumerary subunits COX4I, COX5A, COX5B, COX6A, COX6B, COX6C, COX7A, COX7B, COX7C, COX8 and NDUFA4, which are encoded in the nuclear genome. The complex exists as a monomer or a dimer and forms supercomplexes (SCs) in the inner mitochondrial membrane with NADH-ubiquinone oxidoreductase (complex I, CI) and ubiquinol-cytochrome c oxidoreductase (cytochrome b-c1 complex, complex III, CIII), resulting in different assemblies (supercomplex SCI(1)III(2)IV(1) and megacomplex MCI(2)III(2)IV(2)).

It localises to the mitochondrion inner membrane. The catalysed reaction is 4 Fe(II)-[cytochrome c] + O2 + 8 H(+)(in) = 4 Fe(III)-[cytochrome c] + 2 H2O + 4 H(+)(out). In terms of biological role, component of the cytochrome c oxidase, the last enzyme in the mitochondrial electron transport chain which drives oxidative phosphorylation. The respiratory chain contains 3 multisubunit complexes succinate dehydrogenase (complex II, CII), ubiquinol-cytochrome c oxidoreductase (cytochrome b-c1 complex, complex III, CIII) and cytochrome c oxidase (complex IV, CIV), that cooperate to transfer electrons derived from NADH and succinate to molecular oxygen, creating an electrochemical gradient over the inner membrane that drives transmembrane transport and the ATP synthase. Cytochrome c oxidase is the component of the respiratory chain that catalyzes the reduction of oxygen to water. Electrons originating from reduced cytochrome c in the intermembrane space (IMS) are transferred via the dinuclear copper A center (CU(A)) of subunit 2 and heme A of subunit 1 to the active site in subunit 1, a binuclear center (BNC) formed by heme A3 and copper B (CU(B)). The BNC reduces molecular oxygen to 2 water molecules using 4 electrons from cytochrome c in the IMS and 4 protons from the mitochondrial matrix. The polypeptide is Cytochrome c oxidase subunit 3 (MT-CO3) (Canis lupus (Gray wolf)).